The sequence spans 211 residues: Protein-L-isoaspartate O-methyltransferase (211 aa).

Ser62 is a catalytic residue.

The protein belongs to the methyltransferase superfamily. L-isoaspartyl/D-aspartyl protein methyltransferase family.

Its subcellular location is the cytoplasm. It carries out the reaction [protein]-L-isoaspartate + S-adenosyl-L-methionine = [protein]-L-isoaspartate alpha-methyl ester + S-adenosyl-L-homocysteine. Its function is as follows. Catalyzes the methyl esterification of L-isoaspartyl residues in peptides and proteins that result from spontaneous decomposition of normal L-aspartyl and L-asparaginyl residues. It plays a role in the repair and/or degradation of damaged proteins. This is Protein-L-isoaspartate O-methyltransferase from Shewanella oneidensis (strain ATCC 700550 / JCM 31522 / CIP 106686 / LMG 19005 / NCIMB 14063 / MR-1).